A 292-amino-acid chain; its full sequence is Cyclin-dependent-like kinase 5 (292 aa).

In terms of domain architecture, Protein kinase spans 4–286; it reads YEKLEKIGEG…ADEALQHPYF (283 aa). Residues 10–18 and Lys33 contribute to the ATP site; that span reads IGEGTYGTV. Thr14 bears the Phosphothreonine mark. At Tyr15 the chain carries Phosphotyrosine. Thr17 bears the Phosphothreonine mark. The residue at position 46 (Ser46) is a Phosphoserine. At Lys56 the chain carries N6-acetyllysine. Residue Ser72 is modified to Phosphoserine. Asp126 functions as the Proton acceptor in the catalytic mechanism. Residue Ser159 is modified to Phosphoserine. Phosphotyrosine is present on Tyr239.

It belongs to the protein kinase superfamily. CMGC Ser/Thr protein kinase family. CDC2/CDKX subfamily.

It localises to the nucleus. The protein resides in the cytoplasm. The protein localises to the cell membrane. It is found in the perikaryon. Its subcellular location is the cell projection. It localises to the growth cone. The protein resides in the lamellipodium. The protein localises to the postsynaptic density. The enzyme catalyses L-seryl-[protein] + ATP = O-phospho-L-seryl-[protein] + ADP + H(+). The catalysed reaction is L-threonyl-[protein] + ATP = O-phospho-L-threonyl-[protein] + ADP + H(+). In terms of biological role, proline-directed serine/threonine-protein kinase essential for neuronal cell cycle arrest and differentiation and may be involved in apoptotic cell death in neuronal diseases by triggering abortive cell cycle re-entry. Interacts with D1 and D3-type G1 cyclins. Regulates several neuronal development and physiological processes including neuronal survival, migration and differentiation, axonal and neurite growth, synaptogenesis, oligodendrocyte differentiation, synaptic plasticity and neurotransmission, by phosphorylating key proteins. In the mature central nervous system (CNS), regulates neurotransmitter movements by phosphorylating substrates associated with neurotransmitter release and synapse plasticity; synaptic vesicle exocytosis, vesicles fusion with the presynaptic membrane, and endocytosis. May regulate endothelial cell migration and angiogenesis via the modulation of lamellipodia formation. The complex p35/CDK5 may participate in the regulation of the circadian clock. This is Cyclin-dependent-like kinase 5 (cdk5) from Xenopus laevis (African clawed frog).